The primary structure comprises 163 residues: Regulator of chromosome segregation (163 aa).

In terms of assembly, interacts with CpsD and ParB.

The protein localises to the cytoplasm. It localises to the nucleoid. Its subcellular location is the cell membrane. Required for cell division and chromosome segregation. Binds to DNA and is involved in segregating the origin of replication (oriC) region to new daughter cells. When the nucleoid is not properly segregated, involved in blocking the cell division to protect the nucleoid against premature truncation by the newly forming septum, a function which is dependent on CpsD and its autophosphorylation level. In Streptococcus pneumoniae serotype 2 (strain D39 / NCTC 7466), this protein is Regulator of chromosome segregation.